Here is a 99-residue protein sequence, read N- to C-terminus: PqqA binding protein (99 aa).

Belongs to the PqqD family. In terms of assembly, monomer. Interacts with PqqE.

Its pathway is cofactor biosynthesis; pyrroloquinoline quinone biosynthesis. Functionally, functions as a PqqA binding protein and presents PqqA to PqqE, in the pyrroloquinoline quinone (PQQ) biosynthetic pathway. The sequence is that of PqqA binding protein from Acinetobacter baylyi (strain ATCC 33305 / BD413 / ADP1).